We begin with the raw amino-acid sequence, 365 residues long: Myb/SANT-like DNA-binding domain-containing protein 3 (365 aa).

A Myb-like domain is found at 13 to 78 (FSELEKSVLL…QLKKCWENIK (66 aa)). Residues 301 to 337 (QLIQMNEVHVAKVQQIERECEMAEEEHRIKMEILNKK) adopt a coiled-coil conformation.

Belongs to the MSANTD3 family.

The polypeptide is Myb/SANT-like DNA-binding domain-containing protein 3 (msantd3) (Xenopus laevis (African clawed frog)).